The sequence spans 67 residues: Small ribosomal subunit protein eS17 (67 aa).

The protein belongs to the eukaryotic ribosomal protein eS17 family.

This is Small ribosomal subunit protein eS17 from Thermococcus gammatolerans (strain DSM 15229 / JCM 11827 / EJ3).